A 460-amino-acid polypeptide reads, in one-letter code: Homocitrate synthase (460 aa).

One can recognise a Pyruvate carboxyltransferase domain in the interval 3-258 (VGILDSTLRE…IEVVKLNKLQ (256 aa)). Residue R11 coordinates 2-oxoglutarate. E12 is a Mg(2+) binding site. 3 residues coordinate 2-oxoglutarate: H75, R135, and T169. Residues H197 and H199 each coordinate Mg(2+). Residue H291 is the Proton acceptor of the active site.

Belongs to the alpha-IPM synthase/homocitrate synthase family. Homocitrate synthase LYS20/LYS21 subfamily. As to quaternary structure, forms a homotetramer in the absence of lysine, and is in hexadecamer-octamer equilibrium in the presence of lysine. Requires Mg(2+) as cofactor. The cofactor is Mn(2+).

It catalyses the reaction acetyl-CoA + 2-oxoglutarate + H2O = (2R)-homocitrate + CoA + H(+). It participates in amino-acid biosynthesis; L-lysine biosynthesis via AAA pathway; L-alpha-aminoadipate from 2-oxoglutarate: step 1/5. Inhibited by lysine. Functionally, catalyzes the aldol-type condensation of 2-oxoglutarate with acetyl-CoA to yield homocitrate. Carries out the first step of the alpha-aminoadipate (AAA) lysine biosynthesis pathway. In Sulfurisphaera tokodaii (strain DSM 16993 / JCM 10545 / NBRC 100140 / 7) (Sulfolobus tokodaii), this protein is Homocitrate synthase.